Here is an 828-residue protein sequence, read N- to C-terminus: Kinesin-associated protein 3 (828 aa).

3 ARM repeats span residues 332-372 (YVEN…NLSF), 373-411 (DTDL…HVSQ), and 577-611 (DDSC…CQIV).

As to quaternary structure, heterotrimer of a 115 kDa subunit (KAP115) and two kinesin-like subunits of 95 kDa (KRP95) and 85 kDa (KRP85).

In terms of biological role, binds to the tail domain of the KRP85/KRP95 heterodimer to form a heterotrimeric kinesin-II complex and may regulate the spindle vesicle targeting of this complex. The sequence is that of Kinesin-associated protein 3 (KAP115) from Strongylocentrotus purpuratus (Purple sea urchin).